Consider the following 518-residue polypeptide: Membrane-bound lytic murein transglycosylase F (518 aa).

The signal sequence occupies residues 1–21 (MKKLKINYLFIGILALLLAVA). The non-LT domain stretch occupies residues 22–269 (LWPSIPWFGK…RIEEKYLGHG (248 aa)). Positions 270–518 (DDFDYVDTRT…SRKGSEEKQN (249 aa)) are LT domain. E314 is a catalytic residue.

It in the N-terminal section; belongs to the bacterial solute-binding protein 3 family. In the C-terminal section; belongs to the transglycosylase Slt family.

It localises to the cell outer membrane. It carries out the reaction Exolytic cleavage of the (1-&gt;4)-beta-glycosidic linkage between N-acetylmuramic acid (MurNAc) and N-acetylglucosamine (GlcNAc) residues in peptidoglycan, from either the reducing or the non-reducing ends of the peptidoglycan chains, with concomitant formation of a 1,6-anhydrobond in the MurNAc residue.. In terms of biological role, murein-degrading enzyme that degrades murein glycan strands and insoluble, high-molecular weight murein sacculi, with the concomitant formation of a 1,6-anhydromuramoyl product. Lytic transglycosylases (LTs) play an integral role in the metabolism of the peptidoglycan (PG) sacculus. Their lytic action creates space within the PG sacculus to allow for its expansion as well as for the insertion of various structures such as secretion systems and flagella. In Escherichia coli O157:H7, this protein is Membrane-bound lytic murein transglycosylase F.